The following is a 483-amino-acid chain: Aspartyl/glutamyl-tRNA(Asn/Gln) amidotransferase subunit B (483 aa).

It belongs to the GatB/GatE family. GatB subfamily. In terms of assembly, heterotrimer of A, B and C subunits.

The enzyme catalyses L-glutamyl-tRNA(Gln) + L-glutamine + ATP + H2O = L-glutaminyl-tRNA(Gln) + L-glutamate + ADP + phosphate + H(+). It catalyses the reaction L-aspartyl-tRNA(Asn) + L-glutamine + ATP + H2O = L-asparaginyl-tRNA(Asn) + L-glutamate + ADP + phosphate + 2 H(+). In terms of biological role, allows the formation of correctly charged Asn-tRNA(Asn) or Gln-tRNA(Gln) through the transamidation of misacylated Asp-tRNA(Asn) or Glu-tRNA(Gln) in organisms which lack either or both of asparaginyl-tRNA or glutaminyl-tRNA synthetases. The reaction takes place in the presence of glutamine and ATP through an activated phospho-Asp-tRNA(Asn) or phospho-Glu-tRNA(Gln). The chain is Aspartyl/glutamyl-tRNA(Asn/Gln) amidotransferase subunit B from Granulibacter bethesdensis (strain ATCC BAA-1260 / CGDNIH1).